Consider the following 296-residue polypeptide: MIFAVVDILEISIQLLCILLFGTTVINCVSKGRHKDVNAIVRETESKKIVPWSDAKVQIKKFLGDGASGTAYLVVWEDKEVVMKVTGIHPQSISVLHDELLITQKIGKLSKSCHNFLPYHGSIVISDLPAKMMRNSECVNHLAIFMGYGGTVLADWRTSDYRRCITIMAQLVLAMRIANDKMKFVHGDIYMMNILIAPTTKRWIEYNIDGKTITIQTFGIIPQLIDFSKSWCGADPERHDISRLHTVAKRVGHSLNGSKRDKKKVRQAVKMVGAAKNWKNLCLYRQLFKQVIVHDH.

The helical transmembrane segment at 1 to 21 threads the bilayer; it reads MIFAVVDILEISIQLLCILLF.

The protein resides in the membrane. This is an uncharacterized protein from Caenorhabditis elegans.